The chain runs to 614 residues: UDP-sugar pyrophosphorylase (614 aa).

A2 is modified (N-acetylalanine).

Belongs to the USP family. It depends on Mg(2+) as a cofactor. Mn(2+) is required as a cofactor. Ubiquitous, but most abundant in rosette leaves, inflorescences, stems, stamens and pollen.

The enzyme catalyses a monosaccharide 1-phosphate + UTP + H(+) = a UDP-monosaccharide + diphosphate. Functionally, required for the synthesis of the intine, the pectocellulosic inner wall of developing pollen. May function as the terminal enzyme of the myo-inositol oxidation (MIO) pathway. May also play a role in the salvage pathway for synthesis of nucleotide sugars. Can use a wide range of substrates including glucose-1-phosphate, galactose-1-phosphate, xylose-1-phosphate, arabinose-1-phosphate and glucuronate-1-phosphate. The polypeptide is UDP-sugar pyrophosphorylase (USP) (Arabidopsis thaliana (Mouse-ear cress)).